The chain runs to 603 residues: Isocitrate dehydrogenase kinase/phosphatase (603 aa).

Residues 327–333 (APGIKGL) and Lys-348 each bind ATP. The active site involves Asp-383.

Belongs to the AceK family.

The protein resides in the cytoplasm. The enzyme catalyses L-seryl-[isocitrate dehydrogenase] + ATP = O-phospho-L-seryl-[isocitrate dehydrogenase] + ADP + H(+). Functionally, bifunctional enzyme which can phosphorylate or dephosphorylate isocitrate dehydrogenase (IDH) on a specific serine residue. This is a regulatory mechanism which enables bacteria to bypass the Krebs cycle via the glyoxylate shunt in response to the source of carbon. When bacteria are grown on glucose, IDH is fully active and unphosphorylated, but when grown on acetate or ethanol, the activity of IDH declines drastically concomitant with its phosphorylation. The chain is Isocitrate dehydrogenase kinase/phosphatase from Burkholderia thailandensis (strain ATCC 700388 / DSM 13276 / CCUG 48851 / CIP 106301 / E264).